The following is a 376-amino-acid chain: Carbamoyl phosphate synthase small chain (376 aa).

The interval 1–184 (MKAILALADG…SEGYQQQTGE (184 aa)) is CPSase. Residues Ser-45, Gly-236, and Gly-238 each coordinate L-glutamine. The 187-residue stretch at 188–374 (KVVAYDFGIK…ADLMEKNRQS (187 aa)) folds into the Glutamine amidotransferase type-1 domain. Cys-263 (nucleophile) is an active-site residue. 5 residues coordinate L-glutamine: Leu-264, Gln-267, Asn-305, Gly-307, and Phe-308. Catalysis depends on residues His-347 and Glu-349.

The protein belongs to the CarA family. As to quaternary structure, composed of two chains; the small (or glutamine) chain promotes the hydrolysis of glutamine to ammonia, which is used by the large (or ammonia) chain to synthesize carbamoyl phosphate. Tetramer of heterodimers (alpha,beta)4.

It catalyses the reaction hydrogencarbonate + L-glutamine + 2 ATP + H2O = carbamoyl phosphate + L-glutamate + 2 ADP + phosphate + 2 H(+). It carries out the reaction L-glutamine + H2O = L-glutamate + NH4(+). The protein operates within amino-acid biosynthesis; L-arginine biosynthesis; carbamoyl phosphate from bicarbonate: step 1/1. It participates in pyrimidine metabolism; UMP biosynthesis via de novo pathway; (S)-dihydroorotate from bicarbonate: step 1/3. Small subunit of the glutamine-dependent carbamoyl phosphate synthetase (CPSase). CPSase catalyzes the formation of carbamoyl phosphate from the ammonia moiety of glutamine, carbonate, and phosphate donated by ATP, constituting the first step of 2 biosynthetic pathways, one leading to arginine and/or urea and the other to pyrimidine nucleotides. The small subunit (glutamine amidotransferase) binds and cleaves glutamine to supply the large subunit with the substrate ammonia. The polypeptide is Carbamoyl phosphate synthase small chain (Syntrophotalea carbinolica (strain DSM 2380 / NBRC 103641 / GraBd1) (Pelobacter carbinolicus)).